We begin with the raw amino-acid sequence, 516 residues long: Ammonium transporter Amt1 (516 aa).

A run of 11 helical transmembrane segments spans residues 17 to 37 (YVWI…FALL), 59 to 79 (ALGV…VGGL), 101 to 121 (IDWL…SGAV), 130 to 150 (YVVF…GLTW), 170 to 190 (LDFA…LVGA), 214 to 234 (MLLA…FNVG), 258 to 278 (VALV…VVST), 286 to 306 (PLWM…AVPH), 307 to 327 (VTWW…LPAY), 342 to 362 (VFAV…VFAV), and 374 to 394 (VAGV…VFAA). The segment at 426 to 516 (IGESGPDRGV…SAAVDGGENQ (91 aa)) is disordered. Basic and acidic residues predominate over residues 445–491 (NDVRTDGGNDVRTDGGNDVRTDGGNDVRTDGGNDVRTDGGNDVRTDG).

This sequence belongs to the ammonia transporter channel (TC 1.A.11.2) family. In terms of assembly, homotrimer. Interacts with both GlnK1 and GlnK2 after ammonium shock. Interaction is rapid, reversible and dependent on nitrogen source.

It is found in the cell membrane. Involved in the uptake of ammonium/ammonia (NH(4)(+)/NH(3)). Transport is electrogenic. The polypeptide is Ammonium transporter Amt1 (Haloferax mediterranei (strain ATCC 33500 / DSM 1411 / JCM 8866 / NBRC 14739 / NCIMB 2177 / R-4) (Halobacterium mediterranei)).